The following is a 453-amino-acid chain: Adenosylmethionine-8-amino-7-oxononanoate aminotransferase (453 aa).

118 to 119 (GS) lines the pyridoxal 5'-phosphate pocket. Tyr-151 provides a ligand contact to substrate. Asp-258 is a binding site for pyridoxal 5'-phosphate. The substrate site is built by Lys-287, Gly-322, and Arg-417. Lys-287 bears the N6-(pyridoxal phosphate)lysine mark.

This sequence belongs to the class-III pyridoxal-phosphate-dependent aminotransferase family. BioA subfamily. In terms of assembly, homodimer. Pyridoxal 5'-phosphate serves as cofactor.

The protein localises to the cytoplasm. It catalyses the reaction (8S)-8-amino-7-oxononanoate + S-adenosyl-L-methionine = S-adenosyl-4-methylsulfanyl-2-oxobutanoate + (7R,8S)-7,8-diammoniononanoate. Its pathway is cofactor biosynthesis; biotin biosynthesis; 7,8-diaminononanoate from 8-amino-7-oxononanoate (SAM route): step 1/1. In terms of biological role, catalyzes the transfer of the alpha-amino group from S-adenosyl-L-methionine (SAM) to 7-keto-8-aminopelargonic acid (KAPA) to form 7,8-diaminopelargonic acid (DAPA). It is the only aminotransferase known to utilize SAM as an amino donor. The sequence is that of Adenosylmethionine-8-amino-7-oxononanoate aminotransferase from Geobacter sulfurreducens (strain ATCC 51573 / DSM 12127 / PCA).